Here is a 480-residue protein sequence, read N- to C-terminus: Aspartyl/glutamyl-tRNA(Asn/Gln) amidotransferase subunit B (480 aa).

The protein belongs to the GatB/GatE family. GatB subfamily. Heterotrimer of A, B and C subunits.

The catalysed reaction is L-glutamyl-tRNA(Gln) + L-glutamine + ATP + H2O = L-glutaminyl-tRNA(Gln) + L-glutamate + ADP + phosphate + H(+). It catalyses the reaction L-aspartyl-tRNA(Asn) + L-glutamine + ATP + H2O = L-asparaginyl-tRNA(Asn) + L-glutamate + ADP + phosphate + 2 H(+). Allows the formation of correctly charged Asn-tRNA(Asn) or Gln-tRNA(Gln) through the transamidation of misacylated Asp-tRNA(Asn) or Glu-tRNA(Gln) in organisms which lack either or both of asparaginyl-tRNA or glutaminyl-tRNA synthetases. The reaction takes place in the presence of glutamine and ATP through an activated phospho-Asp-tRNA(Asn) or phospho-Glu-tRNA(Gln). This Streptococcus pneumoniae (strain 70585) protein is Aspartyl/glutamyl-tRNA(Asn/Gln) amidotransferase subunit B.